The primary structure comprises 884 residues: Probable disease resistance protein At1g12290 (884 aa).

The stretch at 26 to 66 forms a coiled coil; it reads LYYIQNIKENLTSLEEAMEDLKALRDDLLRKVQTAEEGGLQ. One can recognise an NB-ARC domain in the interval 139-443; the sequence is AHPATRAVGE…CEGFIDGDEN (305 aa). 182 to 189 provides a ligand contact to ATP; it reads GMGGVGKT. 6 LRR repeats span residues 519–540, 541–563, 566–588, 590–612, 613–635, and 644–664; these read VVSRMSLVNNRIKEIHGSPECP, KLTTLFLQDNRHLVNISGEFFRS, RLVVLDLSWNVNLSGLPDQISEL, SLRYLDLSYSSIGRLPVGLLKLK, KLMHLNLESMLCLESVSGIDHLS, and NLRMWLTISLLEELERLENLE.

The protein belongs to the disease resistance NB-LRR family.

Probable disease resistance protein. The sequence is that of Probable disease resistance protein At1g12290 from Arabidopsis thaliana (Mouse-ear cress).